The sequence spans 559 residues: O-fucosyltransferase 37 (559 aa).

A helical; Signal-anchor for type II membrane protein membrane pass occupies residues 53 to 73 (FFLLLISLSLVFSGISFLTFS). A glycan (N-linked (GlcNAc...) asparagine) is linked at Asn-126. 331 to 333 (HLR) is a substrate binding site. Asn-372, Asn-403, Asn-447, and Asn-504 each carry an N-linked (GlcNAc...) asparagine glycan.

The protein belongs to the glycosyltransferase GT106 family.

The protein resides in the membrane. The protein operates within glycan metabolism. The chain is O-fucosyltransferase 37 from Arabidopsis thaliana (Mouse-ear cress).